Here is a 137-residue protein sequence, read N- to C-terminus: MQATENKEKVVYWGTGRRKSAVARVRLVPGSGEIIVNKKPGNIYFNRIPDYLQAIKGPLETLGLENDYDILVNAHGGGLTGQADAVKLGVARALCELAPENRPPLKAEGYLTRDPRAKERKKYGLHKARKAPQYSKR.

Residues 103–137 are disordered; that stretch reads PPLKAEGYLTRDPRAKERKKYGLHKARKAPQYSKR. Positions 118 to 137 are enriched in basic residues; the sequence is KERKKYGLHKARKAPQYSKR.

Belongs to the universal ribosomal protein uS9 family.

This is Small ribosomal subunit protein uS9 from Crocosphaera subtropica (strain ATCC 51142 / BH68) (Cyanothece sp. (strain ATCC 51142)).